The sequence spans 211 residues: Protein-L-isoaspartate O-methyltransferase (211 aa).

Serine 60 is an active-site residue.

Belongs to the methyltransferase superfamily. L-isoaspartyl/D-aspartyl protein methyltransferase family.

It localises to the cytoplasm. The enzyme catalyses [protein]-L-isoaspartate + S-adenosyl-L-methionine = [protein]-L-isoaspartate alpha-methyl ester + S-adenosyl-L-homocysteine. Its function is as follows. Catalyzes the methyl esterification of L-isoaspartyl residues in peptides and proteins that result from spontaneous decomposition of normal L-aspartyl and L-asparaginyl residues. It plays a role in the repair and/or degradation of damaged proteins. This Pseudomonas aeruginosa (strain LESB58) protein is Protein-L-isoaspartate O-methyltransferase.